Consider the following 424-residue polypeptide: Glutamyl-tRNA reductase (424 aa).

Substrate contacts are provided by residues 49-52 (TCNR), Ser108, 113-115 (EPQ), and Gln119. Cys50 acts as the Nucleophile in catalysis. An NADP(+)-binding site is contributed by 188-193 (GAGETI).

This sequence belongs to the glutamyl-tRNA reductase family. As to quaternary structure, homodimer.

It catalyses the reaction (S)-4-amino-5-oxopentanoate + tRNA(Glu) + NADP(+) = L-glutamyl-tRNA(Glu) + NADPH + H(+). It functions in the pathway porphyrin-containing compound metabolism; protoporphyrin-IX biosynthesis; 5-aminolevulinate from L-glutamyl-tRNA(Glu): step 1/2. Functionally, catalyzes the NADPH-dependent reduction of glutamyl-tRNA(Glu) to glutamate 1-semialdehyde (GSA). This chain is Glutamyl-tRNA reductase, found in Hahella chejuensis (strain KCTC 2396).